Here is a 149-residue protein sequence, read N- to C-terminus: UPF0208 membrane protein PBPRA2797 (149 aa).

2 helical membrane passes run 41 to 60 (FATRVMPAVAVMSVLSQMAF) and 65 to 87 (ALPQAMTVALFALTMPLQGLWWL).

It belongs to the UPF0208 family.

The protein localises to the cell inner membrane. The chain is UPF0208 membrane protein PBPRA2797 from Photobacterium profundum (strain SS9).